The primary structure comprises 373 residues: tRNA-specific 2-thiouridylase MnmA (373 aa).

Residues 12–19 (GMSGGVDS) and methionine 38 contribute to the ATP site. The segment at 98-100 (NPD) is interaction with target base in tRNA. The active-site Nucleophile is the cysteine 103. Cysteine 103 and cysteine 200 are joined by a disulfide. Glycine 127 contributes to the ATP binding site. Residues 150 to 152 (KDQ) form an interaction with tRNA region. The active-site Cysteine persulfide intermediate is cysteine 200. Residues 312–313 (RY) form an interaction with tRNA region.

It belongs to the MnmA/TRMU family.

Its subcellular location is the cytoplasm. The catalysed reaction is S-sulfanyl-L-cysteinyl-[protein] + uridine(34) in tRNA + AH2 + ATP = 2-thiouridine(34) in tRNA + L-cysteinyl-[protein] + A + AMP + diphosphate + H(+). Catalyzes the 2-thiolation of uridine at the wobble position (U34) of tRNA, leading to the formation of s(2)U34. This chain is tRNA-specific 2-thiouridylase MnmA, found in Streptococcus thermophilus (strain CNRZ 1066).